Consider the following 547-residue polypeptide: Cytochrome P450 monooxygenase fsoD (547 aa).

Residues 3–23 (DITLAAVSIGLFFYVGARAVL) traverse the membrane as a helical segment. Cys490 is a binding site for heme.

This sequence belongs to the cytochrome P450 family. It depends on heme as a cofactor.

Its subcellular location is the membrane. It catalyses the reaction isomotiol + reduced [NADPH--hemoprotein reductase] + O2 = 2alpha-hydroxyisomotiol + oxidized [NADPH--hemoprotein reductase] + H2O + H(+). It functions in the pathway secondary metabolite biosynthesis; terpenoid biosynthesis. Its function is as follows. Cytochrome P450 monooxygenase; part of the gene cluster that mediates the biosynthesis of the enfumafungin-type antibiotic, fuscoatroside. Within the pathway, fsoD catalyzes the hydroxylation at position C2 of isomotiol to produce 2-alpha-hydroxy-isomotiol. FsoD may also hydroxylate the intermediates 3-O-(beta-D-glucopyranosyl)-isomotiol and 2-deacetoxy-fuscoatroside at the same position C2. The fuscoatroside biosynthesis is initiated by the cyclization of 2,3(S)-oxidosqualene through FsoA's terpene cyclase (TC) domain, leading to the formation of the fernane skeleton isomotiol, harboring a fernane triterpene skeleton with a C8-C9 double bond. Subsequently, C2-alpha-hydroxylation mediated by fsoD results in the production of 2-alpha-hydroxy-isomotiol, which is further acetylated by fsoF. The glycosyltransferase (GT) domain of FsoA may convert isomotiol, 2-alpha-hydroxy-isomotiol, and the acetylated derivative of 2-alpha-hydroxy-isomotiol into their corresponding glycosides 3-O-(beta-D-glucopyranosyl)-isomotiol, 3-O-(beta-D-glucopyranosyl)-2-alpha-hydroxy-isomotiol, and 3-O-(beta-D-glucopyranosyl)-2-alpha-acetoxy-isomotiol, which then undergo oxidative cleavage under the action of fsoE to form s 2-deacetoxy-fuscoatroside, 2-deacetyl-fuscoatroside, and fuscoatroside, respectively. Although hydroxylation followed by acetylation of 3-O-(beta-D-glucopyranosyl)-isomotiol and 2-deacetoxy-fuscoatroside by fsoD and fsoF could not be ruled out, this process is likely to occur with difficulty due to bulky steric hindrance caused by the presence of a glycan at C3 in these compounds. Interestingly, fsoE can also utilize the aglycones isomotiol and 2-alpha-hydroxy-isomotiol as substrates to generate 19-beta-hydroxy-isomotiol and 2-alpha,19-beta-dihydroxy-isomotiol, respectively. These reactions occur with lower efficiency. Finally, fsoE can further convert 2-alpha,19-beta-dihydroxy-isomotiol into 2-alpha-hydroxy-ismotiol-19-one and 2-alpha-hydroxy-ismotiol-19-one into 2-deacetyl-3-deglucopyranosyl-fuscoatroside. In Humicola fuscoatra, this protein is Cytochrome P450 monooxygenase fsoD.